A 674-amino-acid polypeptide reads, in one-letter code: MMRLRGSAMLRELLLRPPAAVGGVLRRTQPLGTLCRRPRGGSRPAAGLVAAARLHPWWGGGGRAKGPGSGGLSSSPSEILQELGKGGTPPQQQQQQQQQPGASPPAAPGPKDSPGETDAFGNSEGKEMVAAGDNKVKQGLLPSLEDLLFYTIAEGQEKIPVHKFITALKSTGLRTSDPRLKECMDMLRLTLQTTSDGVMLDKDLFKKCVQSNIVLLTQAFRRKFVIPDFMSFTSHIDELYESAKKQSGGKVADYIPQLAKFSPDLWGVSVCTVDGQRHSIGDTKVPFCLQSCVKPLKYAIAVNDLGTEYVHRYVGKEPSGLRFNKLFLNEDDKPHNPMVNAGAIVVTSLIKQGVNNAEKFDYVMQFLNKMAGNEYVGFSNATFQSERESGDRNFAIGYYLKEKKCFPEGTDMVGILDFYFQLCSIEVTCESASVMAATLANGGFCPITGERVLSPEAVRNTLSLMHSCGMYDFSGQFAFHVGLPAKSGVAGGILLVVPNVMGMMCWSPPLDKMGNSVKGIHFCHDLVSLCNFHNYDNLRHFAKKLDPRREGGDQRVKSVINLLFAAYTGDVSALRRFALSAMDMEQRDYDSRTALHVAAAEGHVEVVKFLLEACKVNPFPKDRWNNTPMDEALHFGHHDVFKILQEYQVQYTPQGDSDDGKENQTVHKNLDGLL.

The N-terminal 54 residues, 1–54 (MMRLRGSAMLRELLLRPPAAVGGVLRRTQPLGTLCRRPRGGSRPAAGLVAAARL), are a transit peptide targeting the mitochondrion. A disordered region spans residues 56-123 (PWWGGGGRAK…PGETDAFGNS (68 aa)). The span at 58-71 (WGGGGRAKGPGSGG) shows a compositional bias: gly residues. Low complexity predominate over residues 89-101 (PPQQQQQQQQQPG). An N6-succinyllysine mark is found at K135 and K169. Residue S291 participates in substrate binding. K316 carries the post-translational modification N6-acetyllysine. Positions 320 to 327 (GLRFNKLF) are highly mobile activation loop. Residues N340, E386, N393, Y419, Y471, and V489 each contribute to the substrate site. 2 ANK repeats span residues 590–619 (DSRT…VNPF) and 624–653 (WNNT…QYTP). The tract at residues 652–674 (TPQGDSDDGKENQTVHKNLDGLL) is disordered. S657 carries the post-translational modification Phosphoserine. Over residues 658 to 674 (DDGKENQTVHKNLDGLL) the composition is skewed to basic and acidic residues.

Belongs to the glutaminase family. Homotetramer, dimer of dimers. Tetramer composed of 68 and 65 kDa peptides in a 1:3 ratio. Can assemble into higher oligomers (in vitro), but the physiological significance of this is not clear. Interacts with RAF1 and MAP2K2. Interacts with ATCAY; the interaction is direct and may control GLS localization, negatively regulating its activity. In terms of processing, synthesized as a 74-kDa cytosolic precursor which is proteolytically processed by the mitochondrial-processing peptidase (MPP) via a 72-kDa intermediate to yield the mature mitochondrial 68- and 65-kDa subunits. Kidney, brain, and intestine.

The protein resides in the mitochondrion. It localises to the cytoplasm. Its subcellular location is the cytosol. The protein localises to the mitochondrion matrix. The enzyme catalyses L-glutamine + H2O = L-glutamate + NH4(+). With respect to regulation, enzyme activity is increased by phosphate, due to increased kcat and increased substrate affinity. Functionally, catalyzes the first reaction in the primary pathway for the renal catabolism of glutamine. Plays a role in maintaining acid-base homeostasis. Regulates the levels of the neurotransmitter glutamate, the main excitatory neurotransmitter in the brain. This Rattus norvegicus (Rat) protein is Glutaminase kidney isoform, mitochondrial (Gls).